Consider the following 404-residue polypeptide: Sorting nexin-5 (404 aa).

Position 2 is an N-acetylalanine (alanine 2). The PX domain maps to 25-172; that stretch reads LNVDPSLQID…HVFLEYDQDL (148 aa). Residues 40 to 46, 99 to 105, and 113 to 116 each bind a 1,2-diacyl-sn-glycero-3-phospho-(1D-myo-inositol-4,5-bisphosphate); these read SERDKVK, FDGPREK, and EGSM. The segment at 169-261 is interaction with DOCK1; that stretch reads DQDLSVRRKN…HSLALEEPTV (93 aa). The segment at 183 to 200 is membrane-binding amphipathic helix; that stretch reads FGGFFKSVVKSADEVLFS. Phosphoserine is present on serine 193. One can recognise a BAR domain in the interval 202–404; the sequence is VKEVDDFFEQ…QSCIDLFKNN (203 aa). Lysine 275 carries the N6-acetyllysine modification.

This sequence belongs to the sorting nexin family. As to quaternary structure, forms heterodimers with BAR domain-containing sorting nexins SNX1 and SNX2; does not homodimerize. The heterodimers are proposed to self-assemble into helical arrays on the membrane to stabilize and expand local membrane curvature underlying endosomal tubule formation. Thought to be a component of the originally described retromer complex (also called SNX-BAR retromer) which is a pentamer containing the heterotrimeric retromer cargo-selective complex (CSC), also described as vacuolar protein sorting subcomplex (VPS), and a heterodimeric membrane-deforming subcomplex formed between SNX1 or SNX2 and SNX5 or SNX6 (also called SNX-BAR subcomplex); the respective CSC and SNX-BAR subcomplexes associate with low affinity. Interacts with SNX1, SNX2, VPS26A, VPS29, VPS35, DCTN1, DOCK1, MIB1, PIP5K1C. Interacts with HGS; increased by PIP5K1C kinase activity and by PtdIns(3P) and/or PtdIns(3,4)P2.

The protein resides in the endosome. It is found in the early endosome. The protein localises to the early endosome membrane. Its subcellular location is the cell membrane. It localises to the cytoplasmic vesicle membrane. The protein resides in the cytoplasm. It is found in the cell projection. The protein localises to the phagocytic cup. Its subcellular location is the ruffle. In terms of biological role, involved in several stages of intracellular trafficking. Interacts with membranes containing phosphatidylinositol lipids. Acts in part as component of the retromer membrane-deforming SNX-BAR subcomplex. The SNX-BAR retromer mediates retrograde transport of cargo proteins from endosomes to the trans-Golgi network (TGN) and is involved in endosome-to-plasma membrane transport for cargo protein recycling. The SNX-BAR subcomplex functions to deform the donor membrane into a tubular profile called endosome-to-TGN transport carrier (ETC). Does not have in vitro vesicle-to-membrane remodeling activity. Involved in retrograde transport of lysosomal enzyme receptor IGF2R. May function as link between endosomal transport vesicles and dynactin. Plays a role in the internalization of EGFR after EGF stimulation. Involved in EGFR endosomal sorting and degradation; the function involves PIP5K1C and is retromer-independent. Together with PIP5K1C facilitates HGS interaction with ubiquitinated EGFR, which initiates EGFR sorting to intraluminal vesicles (ILVs) of the multivesicular body for subsequent lysosomal degradation. Involved in E-cadherin sorting and degradation; inhibits PIP5K1C-mediated E-cadherin degradation. Plays a role in macropinocytosis. The protein is Sorting nexin-5 (Snx5) of Rattus norvegicus (Rat).